The primary structure comprises 382 residues: Chaperone protein DnaJ (382 aa).

One can recognise a J domain in the interval 5–69 (DLYGVLGVAK…QKRANYDQSG (65 aa)). The tract at residues 104–123 (QFFGGGGGQRNPNAPRPGRD) is disordered. The segment at 138–220 (GKKTKIKYNR…CGGSGHEEER (83 aa)) adopts a CR-type zinc-finger fold. Positions 151, 154, 168, 171, 194, 197, 208, and 211 each coordinate Zn(2+). CXXCXGXG motif repeat units follow at residues 151 to 158 (CHTCGGNG), 168 to 175 (CHQCGGSG), 194 to 201 (CPVCHGTG), and 208 to 215 (CPTCGGSG). Positions 358–382 (ASGESVTGSGKGNLFNKMRDKFNEN) are disordered.

The protein belongs to the DnaJ family. As to quaternary structure, homodimer. Zn(2+) is required as a cofactor.

The protein localises to the cytoplasm. Participates actively in the response to hyperosmotic and heat shock by preventing the aggregation of stress-denatured proteins and by disaggregating proteins, also in an autonomous, DnaK-independent fashion. Unfolded proteins bind initially to DnaJ; upon interaction with the DnaJ-bound protein, DnaK hydrolyzes its bound ATP, resulting in the formation of a stable complex. GrpE releases ADP from DnaK; ATP binding to DnaK triggers the release of the substrate protein, thus completing the reaction cycle. Several rounds of ATP-dependent interactions between DnaJ, DnaK and GrpE are required for fully efficient folding. Also involved, together with DnaK and GrpE, in the DNA replication of plasmids through activation of initiation proteins. This is Chaperone protein DnaJ from Levilactobacillus brevis (strain ATCC 367 / BCRC 12310 / CIP 105137 / JCM 1170 / LMG 11437 / NCIMB 947 / NCTC 947) (Lactobacillus brevis).